We begin with the raw amino-acid sequence, 424 residues long: Probable carboxypeptidase AN5749 (424 aa).

Residues 1–17 (MNLSILAALALVSFSTA) form the signal peptide. Asn-58 is a glycosylation site (N-linked (GlcNAc...) asparagine). Position 139 (Asp-139) interacts with Zn(2+). Residue Glu-171 is the Proton acceptor of the active site. Zn(2+) is bound at residue Glu-172. N-linked (GlcNAc...) asparagine glycans are attached at residues Asn-184 and Asn-323.

This sequence belongs to the peptidase M20A family. Requires Zn(2+) as cofactor.

It localises to the secreted. The polypeptide is Probable carboxypeptidase AN5749 (Emericella nidulans (strain FGSC A4 / ATCC 38163 / CBS 112.46 / NRRL 194 / M139) (Aspergillus nidulans)).